A 481-amino-acid polypeptide reads, in one-letter code: DNA gyrase subunit B (481 aa).

In terms of domain architecture, Toprim spans 323–442; that stretch reads CELYLVEGDS…QGYVYIAQPP (120 aa). Mg(2+) contacts are provided by Glu-329, Asp-407, and Asp-409.

Belongs to the type II topoisomerase GyrB family. As to quaternary structure, heterotetramer, composed of two GyrA and two GyrB chains. In the heterotetramer, GyrA contains the active site tyrosine that forms a transient covalent intermediate with DNA, while GyrB binds cofactors and catalyzes ATP hydrolysis. Mg(2+) serves as cofactor. It depends on Mn(2+) as a cofactor. Requires Ca(2+) as cofactor.

The protein resides in the cytoplasm. It carries out the reaction ATP-dependent breakage, passage and rejoining of double-stranded DNA.. A type II topoisomerase that negatively supercoils closed circular double-stranded (ds) DNA in an ATP-dependent manner to modulate DNA topology and maintain chromosomes in an underwound state. Negative supercoiling favors strand separation, and DNA replication, transcription, recombination and repair, all of which involve strand separation. Also able to catalyze the interconversion of other topological isomers of dsDNA rings, including catenanes and knotted rings. Type II topoisomerases break and join 2 DNA strands simultaneously in an ATP-dependent manner. In Chitinophaga japonensis (Flexibacter japonensis), this protein is DNA gyrase subunit B (gyrB).